We begin with the raw amino-acid sequence, 426 residues long: Serine--tRNA ligase (426 aa).

T230–E232 is an L-serine binding site. ATP is bound at residue R261–E263. An L-serine-binding site is contributed by E284. E348–S351 is a binding site for ATP. L-serine is bound at residue S384.

The protein belongs to the class-II aminoacyl-tRNA synthetase family. Type-1 seryl-tRNA synthetase subfamily. As to quaternary structure, homodimer. The tRNA molecule binds across the dimer.

It is found in the cytoplasm. The enzyme catalyses tRNA(Ser) + L-serine + ATP = L-seryl-tRNA(Ser) + AMP + diphosphate + H(+). It catalyses the reaction tRNA(Sec) + L-serine + ATP = L-seryl-tRNA(Sec) + AMP + diphosphate + H(+). Its pathway is aminoacyl-tRNA biosynthesis; selenocysteinyl-tRNA(Sec) biosynthesis; L-seryl-tRNA(Sec) from L-serine and tRNA(Sec): step 1/1. Catalyzes the attachment of serine to tRNA(Ser). Is also able to aminoacylate tRNA(Sec) with serine, to form the misacylated tRNA L-seryl-tRNA(Sec), which will be further converted into selenocysteinyl-tRNA(Sec). The protein is Serine--tRNA ligase of Sphingopyxis alaskensis (strain DSM 13593 / LMG 18877 / RB2256) (Sphingomonas alaskensis).